A 79-amino-acid polypeptide reads, in one-letter code: Acyl carrier protein (79 aa).

The region spanning 6-79 is the Carrier domain; that stretch reads KEILDGLAEI…VQDVINYIQK (74 aa). Ser-41 is subject to O-(pantetheine 4'-phosphoryl)serine.

It belongs to the acyl carrier protein (ACP) family. Post-translationally, 4'-phosphopantetheine is transferred from CoA to a specific serine of apo-ACP by AcpS. This modification is essential for activity because fatty acids are bound in thioester linkage to the sulfhydryl of the prosthetic group.

The protein localises to the cytoplasm. It participates in lipid metabolism; fatty acid biosynthesis. In terms of biological role, carrier of the growing fatty acid chain in fatty acid biosynthesis. The protein is Acyl carrier protein of Thermobifida fusca (strain YX).